A 443-amino-acid polypeptide reads, in one-letter code: UPF0597 protein Dvul_2496 (443 aa).

Residues 156–178 (GMERAPEADGTLHGGASCEPSAS) are disordered.

This sequence belongs to the UPF0597 family.

The chain is UPF0597 protein Dvul_2496 from Nitratidesulfovibrio vulgaris (strain DP4) (Desulfovibrio vulgaris).